A 713-amino-acid chain; its full sequence is MASVQQNGQRFGVSEPISMGGPTEFDVIKTRELEKHLQDVGLYESKEEAVRREEVLGILDQIVKTWIKTISRAKGLNDQLLHEANAKIFTFGSYRLGVHGPGADIDTLCVGPRHATREGDFFGELQRMLSEMPEVTELHPVPDAHVPLMGFKLNGVSIDLLYAQLPLWVIPEDLDLSQDSILQNADEQTVRSLNGCRVTDQILRLVPNIQNFRTTLRCMRFWAKRRGVYSNVSGFLGGINWALLVARICQLYPNALPNILVSRFFRVFYQWNWPNAIFLCSPDEGSLGLQVWDPRINPKDRLHIMPIITPAYPCMNSSYNVSESTLRIMKGEFQRGNEICEAMESNKADWDTLFEPFAFFEAYKNYLQIDISAANVDDLRKWKGWVESRLRQLTLKIERHFKMLHCHPHPHDFQDTSRPLHCSYFMGLQRKQGVPAAEGEQFDIRRTVEEFKHTVNAYTLWIPGMEISVGHIKRRSLPNFVFPGGVRPSHTSKGTWDSNRRSEHRNSSTSSAPAATTTTTEMSSESKAGSNSPVDGKKRKWGDSETLTDQPRNSKHIAVSVPVENCEGGSPNPSVGSICSSPMKDYCTNGKSEPISKDPPENVVAFSKDPPESLPIEKIATPQAHETEELEESFDFGNQVIEQISHKVAVLSATATIPPFEATSNGSPFPYEAVEELEVLPTRQPDAAHRPSVQQRKPIIKLSFTSLGKTNGK.

ATP is bound by residues Phe91–Ser93, Ala103–Asp106, Asp159, Tyr229, and Gly238–Ile239. Mg(2+)-binding residues include Asp104, Asp106, and Asp159. Positions Phe480–Lys555 are disordered. Positions Ser507 to Ser526 are enriched in low complexity.

This sequence belongs to the poly(A) polymerase family. Monomer. Forms a complex with cleavage and polyadenylation specificity factor (CPSF) subunit PAPS4. It depends on Mg(2+) as a cofactor. Mn(2+) is required as a cofactor. As to expression, expressed in stems, cotyledons, hypocotyls, radicle, leaves, and, to a lower extent, in roots (including primary and secondary roots as well as root tips) and flowers. In radicle, roots and leaves, mainly present in vascular tissues.

The protein resides in the nucleus. The enzyme catalyses RNA(n) + ATP = RNA(n)-3'-adenine ribonucleotide + diphosphate. Functionally, essential protein. Polymerase that creates the 3'-poly(A) tail of mRNA's. Also required for the endoribonucleolytic cleavage reaction at some polyadenylation sites. May acquire specificity through interaction with a cleavage and polyadenylation specificity factor (CPSF) at its C-terminus. The protein is Nuclear poly(A) polymerase 1 of Arabidopsis thaliana (Mouse-ear cress).